The chain runs to 505 residues: Ion-translocating oxidoreductase complex subunit C (505 aa).

2 4Fe-4S ferredoxin-type domains span residues 381-410 (ELNN…EQLY) and 420-449 (KTQI…MSYY). [4Fe-4S] cluster-binding residues include C390, C393, C396, C400, C429, C432, C435, and C439.

This sequence belongs to the 4Fe4S bacterial-type ferredoxin family. RnfC subfamily. The complex is composed of six subunits: RnfA, RnfB, RnfC, RnfD, RnfE and RnfG. It depends on [4Fe-4S] cluster as a cofactor.

The protein resides in the cell inner membrane. Functionally, part of a membrane-bound complex that couples electron transfer with translocation of ions across the membrane. The polypeptide is Ion-translocating oxidoreductase complex subunit C (Buchnera aphidicola subsp. Baizongia pistaciae (strain Bp)).